The following is a 440-amino-acid chain: Streptokinase C (440 aa).

The signal sequence occupies residues 1 to 26; that stretch reads MKNYLSFGMFALLFALTFGTVNSVQA.

Its function is as follows. This protein is not a protease, but it activates plasminogen by complexing with it. As a potential virulence factor, it is thought to prevent the formation of effective fibrin barriers around the site of infection, thereby contributing to the invasiveness of the cells. This is Streptokinase C (skc) from Streptococcus dysgalactiae subsp. equisimilis (Streptococcus equisimilis).